We begin with the raw amino-acid sequence, 108 residues long: Mitochondrial protein PET191 (108 aa).

The CHCH domain occupies 18 to 64 (RSPCVMIERHNPQECLDNPELNKDLPELCIAQMKAFLDCKRGIVDMT). The Cx10C motif motif lies at 21–32 (CVMIERHNPQEC). 2 disulfide bridges follow: cysteine 21-cysteine 56 and cysteine 32-cysteine 46. Positions 46–56 (CIAQMKAFLDC) match the Cx9C motif motif.

The protein belongs to the PET191 family.

Its subcellular location is the mitochondrion intermembrane space. In terms of biological role, involved in the assembly of cytochrome c oxidase. This Saccharomyces cerevisiae (strain ATCC 204508 / S288c) (Baker's yeast) protein is Mitochondrial protein PET191 (PET191).